The chain runs to 521 residues: Medium/long-chain-fatty-acid--[acyl-carrier-protein] ligase MbtM (521 aa).

The tract at residues Arg146–Lys172 is disordered.

This sequence belongs to the ATP-dependent AMP-binding enzyme family.

The enzyme catalyses a long-chain fatty acid + holo-[ACP] + ATP = a long-chain fatty acyl-[ACP] + AMP + diphosphate. It carries out the reaction a medium-chain fatty acid + holo-[ACP] + ATP = a medium-chain fatty acyl-[ACP] + AMP + diphosphate. It functions in the pathway siderophore biosynthesis; mycobactin biosynthesis. In terms of biological role, activates lipidic moieties required for mycobactin biosynthesis. Converts medium- to long-chain aliphatic fatty acids into acyl adenylate, which is further transferred on to the phosphopantetheine arm of the carrier protein MbtL. In Mycolicibacterium paratuberculosis (strain ATCC BAA-968 / K-10) (Mycobacterium paratuberculosis), this protein is Medium/long-chain-fatty-acid--[acyl-carrier-protein] ligase MbtM (mbtM).